The chain runs to 345 residues: MTGQLRLDDHLQRYSETAPHALAVATAVDAIAAAAIEIADLIGAGDLADASGLTTGRNSDGDVQRDLDVQADAILRRCLGKLSIAALASEEMREPQIGDRAARICVAIDPLDGSSNIDINMTVGTIFSILPAPDDLALAFHQRGSAQFAAGFVTYGPQTSLVLTLGDGVDIFTLDRKAGCFRLARSAIQISEAGEEFAINASNRRHWDPPVRAFIDECLAGVEGPANHDFNMRWVGSLVAEAYRILTRGGVFLYPSDARPGYGDGRLRLTYEAHPMAYIIEQAGGSASTGRERILDLSAQSLHQRVPLIMGSSNEVRRVEELHCDPLLVASISAPLFARRGFFRL.

The Mg(2+) site is built by glutamate 90, aspartate 109, leucine 111, and aspartate 112. Substrate is bound by residues 112 to 115 (DGSS) and asparagine 200. Glutamate 272 contributes to the Mg(2+) binding site.

Belongs to the FBPase class 1 family. In terms of assembly, homotetramer. It depends on Mg(2+) as a cofactor.

It is found in the cytoplasm. The enzyme catalyses beta-D-fructose 1,6-bisphosphate + H2O = beta-D-fructose 6-phosphate + phosphate. The protein operates within carbohydrate biosynthesis; gluconeogenesis. The polypeptide is Fructose-1,6-bisphosphatase class 1 (Bradyrhizobium diazoefficiens (strain JCM 10833 / BCRC 13528 / IAM 13628 / NBRC 14792 / USDA 110)).